The primary structure comprises 253 residues: MGQPLPPVALLLLVSASSRAADVPKALVLLDPPWASVLKDDHVTLKCQGLHPAGDNTTQWLHNGSLLSSQAPAYTITAARAEDGGEYRCQTGLSSLSDPVQLHVHLGWLVLQAPRWVFQEGEPIQLRCHSWKNNKLHKVTYLQNGRGLRYFHQNSDLHIPEATRNHSGSYFCRGLIGHHNMSSETVTITVQGPANPVISSSVLPWHQIAFCLVMGLLLAADTGLYFSVQRDLRSSQRARKEHTLGWSLGSQDK.

Positions 1-20 are cleaved as a signal peptide; sequence MGQPLPPVALLLLVSASSRA. Topologically, residues 21 to 207 are extracellular; sequence ADVPKALVLL…ISSSVLPWHQ (187 aa). Ig-like C2-type domains follow at residues 24–90 and 99–189; these read PKAL…YRCQ and PVQL…VTIT. Cystine bridges form between Cys47-Cys89 and Cys128-Cys172. 4 N-linked (GlcNAc...) asparagine glycosylation sites follow: Asn56, Asn63, Asn165, and Asn180. The helical transmembrane segment at 208-226 threads the bilayer; it reads IAFCLVMGLLLAADTGLYF. The Cytoplasmic segment spans residues 227–253; the sequence is SVQRDLRSSQRARKEHTLGWSLGSQDK.

As to quaternary structure, forms a heterooligomeric complex with ITAM-containing signaling subunits FCER1G. Interacts (via transmembrane domain) with signaling subunits; this interaction is a prerequisite for receptor complex expression on the cell surface and intracellular signal transduction. Binds the Fc region of antigen-complexed IgG.

It localises to the cell membrane. Functionally, receptor for the invariable Fc fragment of immunoglobulin gamma (IgG). Optimally activated upon binding of clustered antigen-IgG complexes displayed on cell surfaces, triggers lysis of antibody-coated cells, a process known as antibody-dependent cellular cytotoxicity (ADCC). Does not bind free monomeric IgG, thus avoiding inappropriate effector cell activation in the absence of antigenic trigger. Mediates IgG effector functions on natural killer (NK) cells. Binds antigen-IgG complexes generated upon infection and triggers NK cell-dependent cytokine production and degranulation to limit viral load and propagation. Fc-binding subunit that associates with FCER1G adapter to form functional signaling complexes. Following the engagement of antigen-IgG complexes, triggers phosphorylation of immunoreceptor tyrosine-based activation motif (ITAM)-containing adapters with subsequent activation of phosphatidylinositol 3-kinase signaling and sustained elevation of intracellular calcium that ultimately drive NK cell activation. Mediates enhanced ADCC in response to afucosylated IgGs. The protein is Low affinity immunoglobulin gamma Fc region receptor III-A of Oryctolagus cuniculus (Rabbit).